The following is a 130-amino-acid chain: Small ribosomal subunit protein uS8 (130 aa).

Belongs to the universal ribosomal protein uS8 family. Part of the 30S ribosomal subunit. Contacts proteins S5 and S12.

In terms of biological role, one of the primary rRNA binding proteins, it binds directly to 16S rRNA central domain where it helps coordinate assembly of the platform of the 30S subunit. This chain is Small ribosomal subunit protein uS8, found in Marinomonas sp. (strain MWYL1).